The primary structure comprises 53 residues: UPF0391 membrane protein YtjA (53 aa).

2 consecutive transmembrane segments (helical) span residues 4–24 and 30–48; these read WGIIFLVIALIAAALGFGGLA and AAKIVFVVGIVLFLVSLFM.

This sequence belongs to the UPF0391 family.

It localises to the cell membrane. This Salmonella agona (strain SL483) protein is UPF0391 membrane protein YtjA.